The following is a 545-amino-acid chain: T-complex protein 1 subunit alpha (545 aa).

It belongs to the TCP-1 chaperonin family. In terms of assembly, heterooligomeric complex of about 850 to 900 kDa that forms two stacked rings, 12 to 16 nm in diameter.

Its subcellular location is the cytoplasm. Molecular chaperone; assists the folding of proteins upon ATP hydrolysis. Known to play a role, in vitro, in the folding of actin and tubulin. The protein is T-complex protein 1 subunit alpha (TCP-1A) of Schistosoma mansoni (Blood fluke).